The sequence spans 361 residues: Peptide chain release factor 1 (361 aa).

Residue Q236 is modified to N5-methylglutamine. Residues T285–R309 show a composition bias toward basic and acidic residues. Residues T285–F313 are disordered.

It belongs to the prokaryotic/mitochondrial release factor family. Methylated by PrmC. Methylation increases the termination efficiency of RF1.

The protein localises to the cytoplasm. Peptide chain release factor 1 directs the termination of translation in response to the peptide chain termination codons UAG and UAA. The polypeptide is Peptide chain release factor 1 (Methylorubrum populi (strain ATCC BAA-705 / NCIMB 13946 / BJ001) (Methylobacterium populi)).